The sequence spans 273 residues: Programmed cell death 1 ligand 2 (273 aa).

Residues 1 to 19 (MIFLLLMLSLELQLHQIAA) form the signal peptide. Residues 20–220 (LFTVTVPKEL…SQMEPRTHPT (201 aa)) are Extracellular-facing. Residues 21–118 (FTVTVPKELY…AWDYKYLTLK (98 aa)) enclose the Ig-like V-type domain. N-linked (GlcNAc...) asparagine glycans are attached at residues Asn37, Asn64, Asn157, Asn163, and Asn189. Intrachain disulfides connect Cys42/Cys102 and Cys143/Cys192. The 82-residue stretch at 122 to 203 (SYRKINTHIL…FWNTHVRELT (82 aa)) folds into the Ig-like C2-type domain. The helical transmembrane segment at 221 to 241 (WLLHIFIPFCIIAFIFIATVI) threads the bilayer. The Cytoplasmic portion of the chain corresponds to 242-273 (ALRKQLCQKLYSSKDTTKRPVTTTKREVNSAI).

Belongs to the immunoglobulin superfamily. BTN/MOG family. In terms of assembly, interacts with PDCD1. In terms of tissue distribution, highly expressed in heart, placenta, pancreas, lung and liver and weakly expressed in spleen, lymph nodes and thymus.

Its subcellular location is the secreted. The protein localises to the endomembrane system. It is found in the cell membrane. Its function is as follows. Involved in the costimulatory signal, essential for T-cell proliferation and IFNG production in a PDCD1-independent manner. Interaction with PDCD1 inhibits T-cell proliferation by blocking cell cycle progression and cytokine production. The chain is Programmed cell death 1 ligand 2 (PDCD1LG2) from Homo sapiens (Human).